Reading from the N-terminus, the 147-residue chain is Large ribosomal subunit protein uL15 (147 aa).

Positions 1 to 54 (MKLFELQPAPGSKKLPNRKGRGIGSGNGKTGGRGHKGQNARAGGGVRPGFEGGQ) are disordered. Gly residues-rich tracts occupy residues 22–31 (GIGSGNGKTG) and 42–52 (AGGGVRPGFEG).

It belongs to the universal ribosomal protein uL15 family. Part of the 50S ribosomal subunit.

Functionally, binds to the 23S rRNA. This Ruminiclostridium cellulolyticum (strain ATCC 35319 / DSM 5812 / JCM 6584 / H10) (Clostridium cellulolyticum) protein is Large ribosomal subunit protein uL15.